We begin with the raw amino-acid sequence, 166 residues long: UPF0561 protein C2orf68 (166 aa).

Residues 32–107 (NQIARDDYDK…SELEPSGHQL (76 aa)) are disordered. Composition is skewed to basic and acidic residues over residues 34-49 (IARD…AAKE) and 73-85 (RHRD…RNPD). The span at 91–104 (ESSSSGGSELEPSG) shows a compositional bias: low complexity.

It belongs to the UPF0561 family.

In Homo sapiens (Human), this protein is UPF0561 protein C2orf68 (C2orf68).